The primary structure comprises 1065 residues: MAVHAPYNHAPPPTQEINGQKPTLAPAITLERPADCINRGQYPAFYIICGYLNRLRADAPHKKYELLTRIFGNWREKVGPDLYPLIRLLLPDKDRERPVYNLKESMLARCYIDILSLEKHSEAAQRLIKWKQPAGNSPNPTGDFAKVCYNEIKARSTVEEGQLSVEAVNMLLDKLAVGKMKQKDYVPILKAINMQCTAEEQEWIIRIILKDLHISIRERGVLSAFHPDAIDLYNVCSDLKRVCWTLYDPGFRLNKNETHLELFHSFLPQLCGRMNDASLENIAKAIGAPKEFIMEEKLDGERIQLHMRGNGAQWFYCSRKAKDYTYLYGAHPGEGSLTRYIATAFQDNVRNVILDGEMMVWDPVVERYLAFGTLKSAALAFSLVKVFDILFLNDHCLSRKRLSERKRLLRSGKIFKNIENYKGRLEFVDEKRGKNAKDIREYLERVVETKGEGLVVKKTDVIYQTNSRGYDWIKVKPEYSDQMGENLEVLVLGGWWGKGGRSGKISRLLCGLREQAFDDGTLQDFLFNRFWNELLGLRVDFVSHLMHLRSMRCSPTHLSQCRNKHKKHWRPFDRSNPPPFMKLGPVGLDDKPDVYIEPENSFVIEVKASEIVPAGYGIGFTLRFPRCKYIYYDKNSRDYALDDECLWTVGQGFFYKTRKLIKRTDFMDLFSRPKRSYDDSQGPGNFRGQKLSDADVETSIFSDMTFSDLEALVHKHGADFTQAQLSDLSAIVISPDQKNPLVRAQIRHGVNVIKPEWVFESIARRTALPFLKEFLVFASEEAQDGRYYNKTLEQYDKVSFVRDRTGGALVDEDGDADVEDEIMDGEDKDEIDVEESRESKNRRMAREDLKEKESNRTLEQKKLQEAWGLRSRASPGDSDSEPEEEMSLKEESDTDSERSRGLRAIYEDEEDGENDSHESDVGVNGDDYRAVPLSGLNDKEEGLMGESPEAMHYDEDRIFYHLAFYIDTAKNAAVNGLESSSPSFDTQERLVKVEKLLIENGGRVARSISDPKLTHIIMDDEDSRRYVELTRKTAMPKRKHIVTPKWVEDCVDEETLLDEDLYKPK.

The disordered stretch occupies residues 1–20 (MAVHAPYNHAPPPTQEINGQ). E295, K297, L298, R302, E357, F387, E452, K457, K474, and K476 together coordinate ATP. K297 acts as the N6-AMP-lysine intermediate in catalysis. E357 lines the Mg(2+) pocket. E452 lines the Mg(2+) pocket. Positions 696–775 (VETSIFSDMT…TALPFLKEFL (80 aa)) constitute a BRCT 1 domain. The interval 825–928 (GEDKDEIDVE…SDVGVNGDDY (104 aa)) is disordered. 2 stretches are compositionally biased toward basic and acidic residues: residues 834–864 (EESRESKNRRMAREDLKEKESNRTLEQKKLQ) and 886–900 (MSLKEESDTDSERSR). In terms of domain architecture, BRCT 2 spans 954–1064 (DEDRIFYHLA…TLLDEDLYKP (111 aa)).

The protein belongs to the ATP-dependent DNA ligase family. It depends on Mg(2+) as a cofactor.

It is found in the nucleus. The enzyme catalyses ATP + (deoxyribonucleotide)n-3'-hydroxyl + 5'-phospho-(deoxyribonucleotide)m = (deoxyribonucleotide)n+m + AMP + diphosphate.. DNA ligase involved in DNA non-homologous end joining (NHEJ); required for double-strand break (DSB) repair. This Cryptococcus neoformans var. neoformans serotype D (strain B-3501A) (Filobasidiella neoformans) protein is DNA ligase 4 (LIG4).